The chain runs to 676 residues: RNA helicase NPH-II (676 aa).

The 176-residue stretch at 172–347 folds into the Helicase ATP-binding domain; that stretch reads FSAWISHRPV…VFLPNPAFIH (176 aa). 185–192 is a binding site for ATP; that stretch reads GGTGVGKT. The DEXH box signature appears at 296–299; sequence DEVH. One can recognise a Helicase C-terminal domain in the interval 366 to 542; sequence NPSSRMAYIE…KFNLTLPEDL (177 aa).

The protein belongs to the DEAD box helicase family. DEAH subfamily. In terms of assembly, monomer.

It is found in the virion. The enzyme catalyses ATP + H2O = ADP + phosphate + H(+). Functionally, NTP-dependent helicase that catalyzes unidirectional unwinding of 3'tailed duplex RNAs and plays an important role during transcription of early mRNAs, presumably by preventing R-loop formation behind the elongating RNA polymerase. Might also play a role in the export of newly synthesized mRNA chains out of the core into the cytoplasm. Required for replication and propagation of viral particles. The protein is RNA helicase NPH-II (OPG084) of Homo sapiens (Human).